The following is a 513-amino-acid chain: Interferon alpha/beta receptor 2 (513 aa).

Positions M1–A21 are cleaved as a signal peptide. The Extracellular portion of the chain corresponds to S22–A242. 2 cysteine pairs are disulfide-bonded: C39-C123 and C85-C93. Residues N42, N58, N65, N78, and N84 are each glycosylated (N-linked (GlcNAc...) asparagine). 3 N-linked (GlcNAc...) asparagine glycosylation sites follow: N149, N191, and N195. C210 and C227 are oxidised to a cystine. Residues I243 to L263 traverse the membrane as a helical segment. Over K264–R513 the chain is Cytoplasmic. The tract at residues G334–K402 is disordered. Y335 carries the phosphotyrosine modification. Polar residues predominate over residues P344 to S354. A compositionally biased stretch (low complexity) spans G377 to G389. Residue S403 is modified to Phosphoserine. The tract at residues G421–S444 is mediates interaction with STAT2 (and required for the recruitment of USP18). Residues S448 and S465 each carry the phosphoserine modification. The segment at E458–R513 is disordered. Y510 is subject to Phosphotyrosine.

The protein belongs to the type II cytokine receptor family. In terms of assembly, heterodimer with IFNAR1; forming the receptor for type I interferon. Interacts with the transcriptional factors STAT1 and STAT2. Interacts with JAK1. Interacts with USP18; indirectly via STAT2, it negatively regulates the assembly of the ternary interferon-IFNAR1-IFNAR2 complex and therefore type I interferon signaling. In terms of processing, phosphorylated on tyrosine residues upon interferon binding. Phosphorylation at Tyr-335 or Tyr-510 are sufficient to mediate interferon dependent activation of STAT1, STAT2 and STAT3 leading to antiproliferative effects on many different cell types. Widely expressed. Detected in liver, testis, kidney, salivary gland, thymus, brain, lung and placenta. Isoform 1, isoform 2 and isoform 3 are expressed in brain.

The protein resides in the cell membrane. It localises to the secreted. Together with IFNAR1, forms the heterodimeric receptor for type I interferons (including interferons alpha, beta, epsilon, omega and kappa). Type I interferon binding activates the JAK-STAT signaling cascade, resulting in transcriptional activation or repression of interferon-regulated genes that encode the effectors of the interferon response. Mechanistically, type I interferon-binding brings the IFNAR1 and IFNAR2 subunits into close proximity with one another, driving their associated Janus kinases (JAKs) (TYK2 bound to IFNAR1 and JAK1 bound to IFNAR2) to cross-phosphorylate one another. The activated kinases phosphorylate specific tyrosine residues on the intracellular domains of IFNAR1 and IFNAR2, forming docking sites for the STAT transcription factors (STAT1, STAT2 and STAT). STAT proteins are then phosphorylated by the JAKs, promoting their translocation into the nucleus to regulate expression of interferon-regulated genes. Functionally, may be potent inhibitors of type I IFN receptor activity. This Mus musculus (Mouse) protein is Interferon alpha/beta receptor 2 (Ifnar2).